The sequence spans 282 residues: D-arabinitol 2-dehydrogenase [ribulose-forming] (282 aa).

NADP(+) contacts are provided by leucine 32 and asparagine 53. The active-site Proton donor is the serine 170. NADP(+) contacts are provided by tyrosine 185, lysine 189, isoleucine 218, and threonine 220. Residue tyrosine 185 is the Proton acceptor of the active site. Lysine 189 functions as the Lowers pKa of active site Tyr in the catalytic mechanism.

This sequence belongs to the short-chain dehydrogenases/reductases (SDR) family.

It carries out the reaction D-arabinitol + NAD(+) = D-ribulose + NADH + H(+). It participates in carbohydrate metabolism; D-arabinitol metabolism. In terms of biological role, catalyzes the NAD(+)-dependent oxidation of D-arabinitol at carbon 4 to produce D-ribulose. This chain is D-arabinitol 2-dehydrogenase [ribulose-forming] (ARD), found in Candida tropicalis (Yeast).